Here is a 143-residue protein sequence, read N- to C-terminus: MFLGTHTPKLDDKGRLTLPAKFRDALVGGLMVTKSQDHSLAVYPRAEFEQLARRASKMSRSNPEARAFLRNLAAGTDEQHPDMQGRITLSADHRRYANLSKDCVVIGAVDYLEIWDAQAWHDYQQTHEENFSAASDEALGDII.

SpoVT-AbrB domains follow at residues 5-47 (THTP…PRAE) and 76-119 (TDEQ…DAQA).

The protein belongs to the MraZ family. In terms of assembly, forms oligomers.

The protein localises to the cytoplasm. It is found in the nucleoid. In Mycobacterium leprae (strain Br4923), this protein is Transcriptional regulator MraZ.